The following is a 180-amino-acid chain: Beta-lactoglobulin (180 aa).

The N-terminal stretch at 1 to 18 (MKCLLLALGLALACAAQA) is a signal peptide. 3 cysteine pairs are disulfide-bonded: C84–C178, C124–C137, and C124–C139.

The protein belongs to the calycin superfamily. Lipocalin family. In terms of assembly, under physiological conditions beta-lactoglobulin exists as an equilibrium mixture of monomeric and dimeric forms. Interaction with LMBR1L is controversial. In terms of processing, alternate disulfide bonds occur in equal amounts. As to expression, synthesized in mammary gland and secreted in milk.

Its subcellular location is the secreted. In terms of biological role, primary component of whey, it binds retinol and is probably involved in the transport of that molecule. The chain is Beta-lactoglobulin (LGB) from Bubalus bubalis (Domestic water buffalo).